The chain runs to 264 residues: Large ribosomal subunit protein uL2 (264 aa).

It belongs to the universal ribosomal protein uL2 family.

The protein resides in the cytoplasm. This chain is Large ribosomal subunit protein uL2 (RPL8), found in Tetrahymena thermophila (strain SB210).